Here is a 446-residue protein sequence, read N- to C-terminus: tRNA wybutosine-synthesizing protein 2 homolog (446 aa).

Residues serine 208, lysine 215, glutamate 255, and 283–284 (DN) each bind S-adenosyl-L-methionine.

It belongs to the class I-like SAM-binding methyltransferase superfamily. TRM5/TYW2 family.

It catalyses the reaction 4-demethylwyosine(37) in tRNA(Phe) + S-adenosyl-L-methionine = 4-demethyl-7-[(3S)-3-amino-3-carboxypropyl]wyosine(37) in tRNA(Phe) + S-methyl-5'-thioadenosine + H(+). It participates in tRNA modification; wybutosine-tRNA(Phe) biosynthesis. In terms of biological role, S-adenosyl-L-methionine-dependent transferase that acts as a component of the wybutosine biosynthesis pathway. Wybutosine is a hyper modified guanosine with a tricyclic base found at the 3'-position adjacent to the anticodon of eukaryotic phenylalanine tRNA. Catalyzes the transfer of the alpha-amino-alpha-carboxypropyl (acp) group from S-adenosyl-L-methionine to the C-7 position of 4-demethylwyosine (imG-14) to produce wybutosine-86. In Mus musculus (Mouse), this protein is tRNA wybutosine-synthesizing protein 2 homolog (Trmt12).